Here is a 665-residue protein sequence, read N- to C-terminus: MNNGVRKKVTLAGLLVSIGIVYGDIGTSPLYVMKAIVNENGGIASVNREYIVGSISLILWTITLLTTVKYVLIALKATNHGEGGIFSLYALVRKKAKWLVLPALIGGAALLADGTLTPAVTVTTAIEGLKNMRFGNDIPVPNQNSVLIITIIILLFLFSIQRMGTSIIGKTFGPIMLIWFTFLGLTGAMNLSHDLSLLEALNPVLAVKILFSPANKVGVLILGAVFLATTGAEALYSDVGHVGKGNIMASWPYVFICLALNYLGQGVWILENPNYHAGNTDFNPFFEALPSQWKFFAIILATLAAIIASQALITGSFTLVSEASGLKFLPRMKIIYPSTEQGQIFIPSINKMLCAATIGIVFLFKTSEHMEAAYGLAITVTMLMTTILLFEYLSLKKVNILLRLVFLFLFGAIESMFLISSLAKFLHGGYVTVIIAAFIGAIMYIWYFGNKVRDRREAKNAYVRLDEYTSMLSNLSHDDSVPLYATNLVYMAKVKYNKFIKRDILYSILDKRPKRAHAYWFVTVNVTNEPFTAEYAINTYGTKNVINVQLYLGFKQQQKVNVYLRQIVHELIKDGTIESQPQEYTTTPGRDVGDFKFVIVNDVISPQTQLNTYEKWLVESRVWLQNLSSNPAVWFGLEYADTVVERVPLILGSQNIKSIQRTKLK.

13 helical membrane passes run 13–33 (GLLV…LYVM), 55–75 (ISLI…LIAL), 98–118 (WLVL…TLTP), 138–158 (IPVP…LFLF), 167–187 (IIGK…GLTG), 195–215 (LSLL…SPAN), 217–237 (VGVL…ALYS), 250–270 (SWPY…VWIL), 295–315 (FFAI…LITG), 344–364 (IFIP…VFLF), 375–395 (GLAI…YLSL), 400–420 (ILLR…FLIS), and 428–448 (GGYV…IWYF).

This sequence belongs to the HAK/KUP transporter (TC 2.A.72) family.

Its subcellular location is the cell membrane. The catalysed reaction is K(+)(in) + H(+)(in) = K(+)(out) + H(+)(out). Its function is as follows. Transport of potassium into the cell. Likely operates as a K(+):H(+) symporter. This chain is Probable potassium transport system protein Kup 2, found in Lactobacillus johnsonii (strain CNCM I-12250 / La1 / NCC 533).